Here is a 361-residue protein sequence, read N- to C-terminus: Peptide chain release factor 1 (361 aa).

Gln235 carries the N5-methylglutamine modification.

The protein belongs to the prokaryotic/mitochondrial release factor family. In terms of processing, methylated by PrmC. Methylation increases the termination efficiency of RF1.

The protein localises to the cytoplasm. Functionally, peptide chain release factor 1 directs the termination of translation in response to the peptide chain termination codons UAG and UAA. The sequence is that of Peptide chain release factor 1 from Xanthomonas campestris pv. campestris (strain 8004).